A 426-amino-acid polypeptide reads, in one-letter code: DNA primase DnaG (426 aa).

The Toprim domain occupies 171 to 245 (DTVILVEGRA…KVDFVARAPP (75 aa)). Residues glutamate 177, aspartate 219, and aspartate 221 each coordinate Mg(2+). The segment at 407-426 (KSEENIQESVSTGESAQTSP) is disordered. Positions 413–426 (QESVSTGESAQTSP) are enriched in polar residues.

It belongs to the archaeal DnaG primase family. As to quaternary structure, forms a ternary complex with MCM helicase and DNA. Component of the archaeal exosome complex. It depends on Mg(2+) as a cofactor.

It catalyses the reaction ssDNA + n NTP = ssDNA/pppN(pN)n-1 hybrid + (n-1) diphosphate.. Its function is as follows. RNA polymerase that catalyzes the synthesis of short RNA molecules used as primers for DNA polymerase during DNA replication. Also part of the exosome, which is a complex involved in RNA degradation. Acts as a poly(A)-binding protein that enhances the interaction between heteromeric, adenine-rich transcripts and the exosome. In Thermofilum pendens (strain DSM 2475 / Hrk 5), this protein is DNA primase DnaG.